Reading from the N-terminus, the 61-residue chain is Metallothionein-1E (61 aa).

The residue at position 1 (M1) is an N-acetylmethionine. Residues 1–29 (MDPNCSCATGGSCTCAGSCKCKECKCTSC) form a beta region. 20 residues coordinate a divalent metal cation: C5, C7, C13, C15, C19, C21, C24, C26, C29, C33, C34, C36, C37, C41, C44, C48, C50, C57, C59, and C60. The interval 30–61 (KKSCCSCCPVGCAKCAQGCVCKGASEKCSCCA) is alpha.

Belongs to the metallothionein superfamily. Type 1 family. In terms of assembly, monomer.

Metallothioneins have a high content of cysteine residues that bind various heavy metals; these proteins are transcriptionally regulated by both heavy metals and glucocorticoids. This chain is Metallothionein-1E (MT1E), found in Homo sapiens (Human).